The chain runs to 1177 residues: Solute carrier family 9 member C1 (1177 aa).

Residues 1 to 17 (MAGIFKEFFFSTEDLPE) lie on the Extracellular side of the membrane. The chain crosses the membrane as a helical span at residues 18–37 (VILTLSLISSIGAFLNRHLE). Residues 38–42 (DFPIP) lie on the Cytoplasmic side of the membrane. A helical membrane pass occupies residues 43–60 (VPVILFLLGCSFEVLSFT). Residues 61 to 76 (SSQVQRYANAIQWMSP) lie on the Extracellular side of the membrane. Residues 77-93 (DLFFRIFTPVVFFTTAF) form a helical membrane-spanning segment. Residues 94–103 (DMDTYMLQKL) are Cytoplasmic-facing. The helical transmembrane segment at 104 to 129 (FWQILLISIPGFLVNYILVLWHLASV) threads the bilayer. Residues 104 to 191 (FWQILLISIP…SLITFTSIMD (88 aa)) are transport core domain. The Extracellular segment spans residues 130 to 135 (NQLLLK). A helical membrane pass occupies residues 136-161 (PTQWLLFSAILVSSDPMLTAAAIRDL). Topologically, residues 162 to 164 (GLS) are cytoplasmic. Residues 165–190 (RSLISLINGESLMTSVISLITFTSIM) traverse the membrane as a helical segment. Residues 191-204 (DFDQRLQSKRNHTL) lie on the Extracellular side of the membrane. The helical transmembrane segment at 205 to 236 (AEEIVGGICSYIIASFLFGILSSKLIQFWMST) threads the bilayer. The Cytoplasmic portion of the chain corresponds to 237 to 240 (VFGD). A helical membrane pass occupies residues 241–262 (DVNHISLIFSILYLIFYICELV). At 263-265 (GMS) the chain is on the extracellular side. Residues 266-279 (GIFTLAIVGLLLNS) form a helical membrane-spanning segment. Residues 280-286 (TSFKAAI) lie on the Cytoplasmic side of the membrane. The chain crosses the membrane as a helical span at residues 287–319 (EETLLLEFWTFLSRIAFLMVFTFFGLLIPAHTY). Residues 320 to 324 (LYIEF) lie on the Extracellular side of the membrane. The chain crosses the membrane as a helical span at residues 325 to 354 (VDIYYSLNIYLTLIVLRFLTLLLISPVLSR). The interval 325–426 (VDIYYSLNIY…FILPVAVTIL (102 aa)) is transport core domain. Residues 355-360 (VGHEFS) are Cytoplasmic-facing. A helical transmembrane segment spans residues 361 to 391 (WRWIFIMVCSEMKGMPNINMALLLAYSDLYF). The Extracellular segment spans residues 392 to 395 (GSDK). Residues 396–426 (EKSQILFHGVLVCLITLVVNRFILPVAVTIL) form a helical membrane-spanning segment. Residues 427 to 612 (GLRDATSTKY…ICHTIVFTEE (186 aa)) lie on the Cytoplasmic side of the membrane. The ion transport-like stretch occupies residues 598–678 (YFFFRICHTI…DFFSHAWNIF (81 aa)). A helical transmembrane segment spans residues 613–633 (FEHVGYLVILMNIFPFIISWI). At 634–637 (SQLN) the chain is on the extracellular side. The helical transmembrane segment at 638 to 664 (VIYHSELKHTNYCFLTLYILEALLKIA) threads the bilayer. Residues 665–671 (AMRKDFF) are Cytoplasmic-facing. Residues 672 to 696 (SHAWNIFELAITLIGILHVILIEID) traverse the membrane as a helical segment. The Extracellular segment spans residues 697–704 (TIKYIFNE). The helical transmembrane segment at 705 to 731 (TEVIVFIKVVQFFRILRIFKLIAPKLL) threads the bilayer. Residues 732-1177 (QIIDKRMSHQ…RINLRKVRKE (446 aa)) lie on the Cytoplasmic side of the membrane.

This sequence belongs to the monovalent cation:proton antiporter 1 (CPA1) transporter (TC 2.A.36) family. As to quaternary structure, interacts with soluble adenylyl cyclase (sAC). As to expression, sperm.

It is found in the cell projection. The protein localises to the cilium. Its subcellular location is the flagellum membrane. Functionally, sperm-specific solute carrier involved in intracellular pH regulation of spermatozoa. Required for sperm motility and fertility. Involved in sperm cell hyperactivation, a step needed for sperm motility which is essential late in the preparation of sperm for fertilization. Required for the expression and bicarbonate regulation of the soluble adenylyl cyclase (sAC). This Homo sapiens (Human) protein is Solute carrier family 9 member C1 (SLC9C1).